The following is a 632-amino-acid chain: Dihydrolipoyllysine-residue acetyltransferase component of pyruvate dehydrogenase complex, mitochondrial (632 aa).

The transit peptide at 1 to 77 (MWRVCARRVQ…LLGSPSRRSY (77 aa)) directs the protein to the mitochondrion. Lipoyl-binding domains are found at residues 82–158 (HQKV…CITV) and 208–284 (HMQI…CIIV). At Ser-91 the chain carries Phosphoserine. 2 positions are modified to N6-lipoyllysine: Lys-123 and Lys-249. The Peripheral subunit-binding (PSBD) domain maps to 342–379 (FVSPLAKKLAAEKGIDLTQVKGTGPEGRIIKKDIDSFV). A CoA-binding site is contributed by Arg-446. Lys-451 is subject to N6-acetyllysine. An N6-succinyllysine modification is found at Lys-458. Residue Ser-460 participates in CoA binding. An N6-succinyllysine modification is found at Lys-532. Residues Ser-551, Asn-552, and Gly-576 each contribute to the CoA site. Catalysis depends on residues His-605 and Asp-609.

This sequence belongs to the 2-oxoacid dehydrogenase family. As to quaternary structure, part of the pyruvate dehydrogenase complex (PDHc) that is a multi-enzyme complex composed of multiple copies of three enzymes, pyruvate dehydrogenase (subunits PDH1A and PDHB, E1 component), dihydrolipoamide acetyltransferase (DLAT, E2 component), and dihydrolipoamide dehydrogenase (DLD, E3 component) to which is added an additional protein the E3-binding protein (PDHX, E3BP). In terms of structural architecture, the E2 and E3BP components assemble into a 60meric central core with icosahedral symmetry. The central core is decorated with E1 and E3 proteins. Currently, two alternative models for the E2:E3BP stoichiometry are considered as being either 48:12 (E2(48)-E3BP(12)) or 40:20 (E2(40)-E3BP(20)). Interacts with PDK2 and PDK3. Interacts with SIRT4. Interacts with PDHB. (R)-lipoate is required as a cofactor. Delipoylated at Lys-123 and Lys-249 by SIRT4, delipoylation decreases the PHD complex activity. As to expression, expressed in flagella of epididymal sperm.

It localises to the mitochondrion matrix. The enzyme catalyses N(6)-[(R)-dihydrolipoyl]-L-lysyl-[protein] + acetyl-CoA = N(6)-[(R)-S(8)-acetyldihydrolipoyl]-L-lysyl-[protein] + CoA. Functionally, as part of the pyruvate dehydrogenase complex, catalyzes the transfers of an acetyl group to a lipoic acid moiety. The pyruvate dehydrogenase complex, catalyzes the overall conversion of pyruvate to acetyl-CoA and CO(2), and thereby links cytoplasmic glycolysis and the mitochondrial tricarboxylic acid (TCA) cycle. The sequence is that of Dihydrolipoyllysine-residue acetyltransferase component of pyruvate dehydrogenase complex, mitochondrial from Rattus norvegicus (Rat).